The primary structure comprises 377 residues: Nitric oxide reductase FlRd-NAD(+) reductase (377 aa).

Belongs to the FAD-dependent oxidoreductase family. FAD is required as a cofactor.

The protein resides in the cytoplasm. The catalysed reaction is 2 reduced [nitric oxide reductase rubredoxin domain] + NAD(+) + H(+) = 2 oxidized [nitric oxide reductase rubredoxin domain] + NADH. It participates in nitrogen metabolism; nitric oxide reduction. Its function is as follows. One of at least two accessory proteins for anaerobic nitric oxide (NO) reductase. Reduces the rubredoxin moiety of NO reductase. This chain is Nitric oxide reductase FlRd-NAD(+) reductase, found in Escherichia coli O6:K15:H31 (strain 536 / UPEC).